Consider the following 911-residue polypeptide: MTEGKSIINANLTPLPDKVGVDGLEDKWRAVWDEDGTYKFRNTRDRKAVYSIDTPPPTVSGSLHVGHVFSYTHTDVIARYKRMRGYDVFYPMGWDDNGLPTERRVQNYYGVRVDVSLPYDPDFKPPFEGTDGKKIDAKDQVPISRKNFIELCERLTAQDEKLFEALWRKLGLSIDWSQTYHTIGQHPQRVAQKAFLRNLARGEAYQQDAPGLWDVTFQTAVAQAELESREYPGFYHKVAFRFEDGTPIYIETTRPELLAACTSLIANPNDERYKQYFGQYVYSPLFKVKVPILAHPAAEMDKGAGIAMCCTFGDVTDVEWWRDLKLPTRPIIQRNGRIVMDTPDWIEDPAGREVFAETAGKTTFSARKIIVDKLRESGDLDGEPTPTKRMTNFYEKGDKPLEIVTSRQWYLKNGGTDAKLNAELIERGKELEFHPDFMRVRYENWVHGLNGDWLISRQRFFGVPFPLWYPVNASGEPDYDHPITPSEDRLPIDPTIDVPEGYDESQRDVPGGFTAEKDIMDTWATSSLTPQIVTHWAEPDEASKALFASTFPMDLRPQGQDIIRTWLFSTVDRAHLENKCLPWAHATLSGWILDPDHKKMSKSKGNVVVPNEPIEKFGADAVRYWAAAARLGLDATYDIGQMKIGRRLAIKLLNATKFALAIGREDENHHVGAAAEAAWNPADVTEPLDRAAMAKLALVVRQATEALESYEHSKALEVIESYFWQFCDDYIELVKNRAYGTPDEHGNVPSEKAVKSARTALGLGLDAFARLLAPYLPYATEEVWSWMHAGSGSVHRTAWPVVDPYVEAATGASPELLTWAGKAVEQLRKIKSEAKVSMKTPILSVALSAASEGVEAIHAALGDIAQAGRVVGKFDLVAKHAEESAAEDAPETEVAVEASELGEPPAKKPKH.

The 'HIGH' region motif lies at 57–67; sequence PTVSGSLHVGH. The 'KMSKS' region motif lies at 599–603; it reads KMSKS. Position 602 (K602) interacts with ATP. Residues 882 to 911 are disordered; the sequence is EESAAEDAPETEVAVEASELGEPPAKKPKH.

Belongs to the class-I aminoacyl-tRNA synthetase family. ValS type 2 subfamily. In terms of assembly, monomer.

Its subcellular location is the cytoplasm. The catalysed reaction is tRNA(Val) + L-valine + ATP = L-valyl-tRNA(Val) + AMP + diphosphate. Functionally, catalyzes the attachment of valine to tRNA(Val). As ValRS can inadvertently accommodate and process structurally similar amino acids such as threonine, to avoid such errors, it has a 'posttransfer' editing activity that hydrolyzes mischarged Thr-tRNA(Val) in a tRNA-dependent manner. The sequence is that of Valine--tRNA ligase from Bifidobacterium longum (strain DJO10A).